Here is a 24-residue protein sequence, read N- to C-terminus: Prokineticin 1-like protein (24 aa).

Cysteine 7 and cysteine 19 are joined by a disulfide.

As to expression, expressed by the skin glands.

Its subcellular location is the secreted. Stimulates insulin secretion by BRIN-BD11 cells in vitro. The sequence is that of Prokineticin 1-like protein from Pelophylax saharicus (Sahara frog).